The following is a 419-amino-acid chain: Creatine kinase S-type, mitochondrial (419 aa).

The transit peptide at 1–39 (MASTFSKLLTGRNASLLFATLGTSALTTGYLVNRQKVCA) directs the protein to the mitochondrion. Residues 40–64 (EARDQHKLFPPSADYPDLRKHNNCM) are cardiolipin-binding. Residues 46–132 (KLFPPSADYP…FDPVIKLRHN (87 aa)) enclose the Phosphagen kinase N-terminal domain. Positions 159 to 401 (YVLSSRVRTG…NYLVDCEKKL (243 aa)) constitute a Phosphagen kinase C-terminal domain. ATP is bound by residues 162–166 (SSRVR) and histidine 225. Phosphotyrosine is present on tyrosine 255. Residues arginine 270, arginine 326, 354-359 (RGTGGV), and aspartate 369 each bind ATP. Threonine 356 is subject to Phosphothreonine.

It belongs to the ATP:guanido phosphotransferase family. In terms of assembly, exists as an octamer composed of four CKMT2 homodimers.

It is found in the mitochondrion inner membrane. The enzyme catalyses creatine + ATP = N-phosphocreatine + ADP + H(+). Reversibly catalyzes the transfer of phosphate between ATP and various phosphogens (e.g. creatine phosphate). Creatine kinase isoenzymes play a central role in energy transduction in tissues with large, fluctuating energy demands, such as skeletal muscle, heart, brain and spermatozoa. This chain is Creatine kinase S-type, mitochondrial (CKMT2), found in Oryctolagus cuniculus (Rabbit).